The sequence spans 109 residues: Fluoride-specific ion channel FluC 1 (109 aa).

3 consecutive transmembrane segments (helical) span residues 21–41, 52–72, and 83–103; these read FYFK…GFFI, ILFS…HFLY, and LFIY…IGFQ.

The protein belongs to the fluoride channel Fluc/FEX (TC 1.A.43) family.

It localises to the cell inner membrane. The catalysed reaction is fluoride(in) = fluoride(out). Functionally, fluoride-specific ion channel. Important for reducing fluoride concentration in the cell, thus reducing its toxicity. This Prochlorococcus marinus subsp. pastoris (strain CCMP1986 / NIES-2087 / MED4) protein is Fluoride-specific ion channel FluC 1.